The following is a 516-amino-acid chain: GMP synthase [glutamine-hydrolyzing] (516 aa).

The Glutamine amidotransferase type-1 domain maps to 5 to 199; sequence PIVILDFGSQ…ARKICGITSK (195 aa). Residue Cys-82 is the Nucleophile of the active site. Catalysis depends on residues His-173 and Glu-175. The region spanning 200 to 391 is the GMPS ATP-PPase domain; sequence WDMGHFAKEQ…LGLPREMVYR (192 aa). 227–233 is an ATP binding site; that stretch reads SGGVDSS.

Homodimer.

It carries out the reaction XMP + L-glutamine + ATP + H2O = GMP + L-glutamate + AMP + diphosphate + 2 H(+). Its pathway is purine metabolism; GMP biosynthesis; GMP from XMP (L-Gln route): step 1/1. Functionally, catalyzes the synthesis of GMP from XMP. The chain is GMP synthase [glutamine-hydrolyzing] from Nitratiruptor sp. (strain SB155-2).